Consider the following 304-residue polypeptide: tRNA dimethylallyltransferase (304 aa).

Residue 10 to 17 (GPTASGKT) participates in ATP binding. 12-17 (TASGKT) serves as a coordination point for substrate. 3 interaction with substrate tRNA regions span residues 35-38 (DSAL), 159-163 (QRLSR), and 240-245 (RCVGYR).

It belongs to the IPP transferase family. Monomer. Mg(2+) serves as cofactor.

It carries out the reaction adenosine(37) in tRNA + dimethylallyl diphosphate = N(6)-dimethylallyladenosine(37) in tRNA + diphosphate. In terms of biological role, catalyzes the transfer of a dimethylallyl group onto the adenine at position 37 in tRNAs that read codons beginning with uridine, leading to the formation of N6-(dimethylallyl)adenosine (i(6)A). The polypeptide is tRNA dimethylallyltransferase (Shewanella putrefaciens (strain CN-32 / ATCC BAA-453)).